Here is a 60-residue protein sequence, read N- to C-terminus: Arabinogalactan protein 14 (60 aa).

The first 28 residues, 1-28 (MEAMKMKLYVVVLVAVIAFSTVHQTVAA), serve as a signal peptide directing secretion. A 4-hydroxyproline mark is found at Pro32, Pro34, and Pro36. O-linked (Ara...) hydroxyproline glycans are attached at residues Pro32, Pro34, and Pro36. Ser38 is lipidated: GPI-anchor amidated serine. Positions 39 to 60 (DASSFIPTFFASVAVMAFGFFF) are cleaved as a propeptide — removed in mature form.

It belongs to the AG-peptide AGP family. Contains 4-hydroxyproline; hydroxylated on Pro-32, Pro-34 and Pro-36. In terms of processing, O-glycosylated on hydroxyprolines; noncontiguous hydroxylproline residues are glycosylated with arabinogalactan.

Its subcellular location is the cell membrane. Proteoglycan that seems to be implicated in diverse developmental roles such as differentiation, cell-cell recognition, embryogenesis and programmed cell death. Involved in the regulation of root hair elongation. The polypeptide is Arabinogalactan protein 14 (Arabidopsis thaliana (Mouse-ear cress)).